Here is a 556-residue protein sequence, read N- to C-terminus: Endonuclease/exonuclease/phosphatase family domain-containing protein 1 (556 aa).

The HhH domain maps to 39 to 68; that stretch reads ERLNINTATEEELMTLPGVTRQVAQNIVEY.

The sequence is that of Endonuclease/exonuclease/phosphatase family domain-containing protein 1 (eepd1) from Xenopus laevis (African clawed frog).